We begin with the raw amino-acid sequence, 419 residues long: MALSVIQACRSLALSTWLLSFCFVHLLCLDFTVAEKEEWYTAFVNITYVDPDTAEVRTEKTECGRYGEHSLKREARGVLAMPAAPHDRHACDPSGRFTPRAHGAWIALISRGNCTYKDKIRHAVGHNASAVVIFNVGSSNPNETITMPHQGISDVVAIMIPEPKGRELVLLMERNITVHMHITIGTRNLQKYVSRTSVVFVSISFIILMIISLAWLVFYYIQRFRYANARDRNQRRLGDAAKKAISQLQVRTIRKGDQETESDFDNCAVCIEGYKPNDVVRILPCRHLFHKCCVDPWLVDHRTCPMCKMNILKALGLTSSAECLNELPLDYELAVGGVALNAMVMSDDVMAGDVGGARDPGVRMGGLPQVLLDSEPLSQDTMPTEQSELQPIASGSSDVSLTTGAGHSDIDTPTDDPKC.

The first 34 residues, 1–34 (MALSVIQACRSLALSTWLLSFCFVHLLCLDFTVA), serve as a signal peptide directing secretion. Residues 35-197 (EKEEWYTAFV…NLQKYVSRTS (163 aa)) are Extracellular-facing. The PA domain occupies 70-172 (SLKREARGVL…PKGRELVLLM (103 aa)). The helical transmembrane segment at 198 to 218 (VVFVSISFIILMIISLAWLVF) threads the bilayer. Over 219-419 (YYIQRFRYAN…IDTPTDDPKC (201 aa)) the chain is Cytoplasmic. An RING-type; atypical zinc finger spans residues 267–308 (CAVCIEGYKPNDVVRILPCRHLFHKCCVDPWLVDHRTCPMCK). The segment at 374–419 (SEPLSQDTMPTEQSELQPIASGSSDVSLTTGAGHSDIDTPTDDPKC) is disordered. A compositionally biased stretch (polar residues) spans 376–405 (PLSQDTMPTEQSELQPIASGSSDVSLTTGA).

The protein localises to the membrane. This is RING finger protein 150 (rnf150) from Danio rerio (Zebrafish).